Reading from the N-terminus, the 236-residue chain is 2,3,4,5-tetrahydropyridine-2,6-dicarboxylate N-acetyltransferase (236 aa).

It belongs to the transferase hexapeptide repeat family. DapH subfamily.

It catalyses the reaction (S)-2,3,4,5-tetrahydrodipicolinate + acetyl-CoA + H2O = L-2-acetamido-6-oxoheptanedioate + CoA. Its pathway is amino-acid biosynthesis; L-lysine biosynthesis via DAP pathway; LL-2,6-diaminopimelate from (S)-tetrahydrodipicolinate (acetylase route): step 1/3. Catalyzes the transfer of an acetyl group from acetyl-CoA to tetrahydrodipicolinate. The protein is 2,3,4,5-tetrahydropyridine-2,6-dicarboxylate N-acetyltransferase of Thermotoga maritima (strain ATCC 43589 / DSM 3109 / JCM 10099 / NBRC 100826 / MSB8).